A 525-amino-acid polypeptide reads, in one-letter code: MDLPVGPGAAGPSNVPAFLTKLWTLVSDPDTDALICWSPSGNSFHVLDQGQFAKEVLPKYFKHSNMASFVRQLNMYGFRKVVHIEQGGLVKPERDDTEFQHPCFLRGQEQLLENIKRKVTSVSTLRSEDIKIRQDSVTKLLTDVQLMKGKQESMDSKLLAMKHENEALWREVASLRQKHAQQQKVVNKLIQFLISLVQSNRILGVKRKIPLMLNDGGPAHPMPKYGRQYSLEHIHGPGPYPAPSPAYSGSSLYSPDAVTSSGPIISDITELAPGSPVASSGGSVDERPLSSSPLVRVKEEPPSPPQSPRAEGASPGRPSSMVETPLSPTTLIDSILRESEPTPVASTTPLVDTGGRPPSPLPASAPEKCLSVACLDKTELSDHLDAMDSNLDNLQTMLTSHGFSVDTSTLLDLFSPSVTVPDMSLPDLDSSLASIQELLSPQEPPRPLEAEKSSPDSGKQLVHYTAQPLLLLDPGSVDVGSSDLPVLFELGEGSYFSEGDDYSDDPTISLLTGSEPPKAKDPTVS.

An N-acetylmethionine modification is found at methionine 1. The tract at residues 15–120 is DNA-binding domain; that stretch reads VPAFLTKLWT…LLENIKRKVT (106 aa). Lysine 80 is subject to N6-acetyllysine. Lysine 91 carries the N6-acetyllysine; alternate modification. Lysine 91 participates in a covalent cross-link: Glycyl lysine isopeptide (Lys-Gly) (interchain with G-Cter in SUMO2); alternate. N6-acetyllysine is present on lysine 118. Serine 121 carries the phosphoserine; by MAPKAPK2 modification. Residues 130–203 form a hydrophobic repeat HR-A/B region; it reads IKIRQDSVTK…ISLVQSNRIL (74 aa). Lysine 131 is covalently cross-linked (Glycyl lysine isopeptide (Lys-Gly) (interchain with G-Cter in SUMO2)). Threonine 142 bears the Phosphothreonine; by CK2 mark. 2 positions are modified to N6-acetyllysine: lysine 150 and lysine 188. The segment at 203 to 224 is d domain; sequence LGVKRKIPLMLNDGGPAHPMPK. N6-acetyllysine; alternate is present on lysine 208. Residue lysine 208 forms a Glycyl lysine isopeptide (Lys-Gly) (interchain with G-Cter in SUMO2); alternate linkage. The regulatory domain stretch occupies residues 221–310; that stretch reads PMPKYGRQYS…PPSPPQSPRA (90 aa). Lysine 224 participates in a covalent cross-link: Glycyl lysine isopeptide (Lys-Gly) (interchain with G-Cter in SUMO2). At serine 230 the chain carries Phosphoserine; by CAMK2A. The tract at residues 266–365 is disordered; that stretch reads SDITELAPGS…RPPSPLPASA (100 aa). Positions 272–283 are enriched in low complexity; sequence APGSPVASSGGS. Residues serine 275 and serine 292 each carry the phosphoserine modification. N6-acetyllysine; alternate is present on lysine 298. Lysine 298 participates in a covalent cross-link: Glycyl lysine isopeptide (Lys-Gly) (interchain with G-Cter in SUMO2); alternate. Residue lysine 298 forms a Glycyl lysine isopeptide (Lys-Gly) (interchain with G-Cter in SUMO); alternate linkage. Residue serine 303 is modified to Phosphoserine; by GSK3-beta. Serine 307 bears the Phosphoserine; by MAPK3 mark. Phosphoserine occurs at positions 314 and 319. At serine 320 the chain carries Phosphoserine; by PKA. Residue threonine 324 is modified to Phosphothreonine. Serine 327 bears the Phosphoserine; by MAPK12 mark. At serine 346 the chain carries Phosphoserine. Serine 359 is subject to Phosphoserine; by MAPK8. The segment at 367–525 is transactivation domain; sequence EKCLSVACLD…PPKAKDPTVS (159 aa). A hydrophobic repeat HR-C region spans residues 380 to 405; it reads LSDHLDAMDSNLDNLQTMLTSHGFSV. The short motif at 408 to 416 is the 9aaTAD element; it reads STLLDLFSP. Serine 415 is modified (phosphoserine; by PLK1). Serine 440 carries the phosphoserine modification. The tract at residues 495–525 is disordered; the sequence is YFSEGDDYSDDPTISLLTGSEPPKAKDPTVS. Lysine 520 is modified (N6-acetyllysine).

This sequence belongs to the HSF family. In terms of assembly, monomer; cytoplasmic latent and transcriptionally inactive monomeric form in unstressed cells. Homotrimer; in response to stress, such as heat shock, homotrimerizes and translocates into the nucleus, binds to heat shock element (HSE) sequences in promoter of heat shock protein (HSP) genes and acquires transcriptional ability. Interacts (via monomeric form) with FKBP4; this interaction occurs in unstressed cells. Associates (via monomeric form) with HSP90 proteins in a multichaperone complex in unnstressed cell; this association maintains HSF1 in a non-DNA-binding and transcriptional inactive form by preventing HSF1 homotrimerization. Homotrimeric transactivation activity is modulated by protein-protein interactions and post-translational modifications. Interacts with HSP90AA1; this interaction is decreased in a IER5-dependent manner, promoting HSF1 accumulation in the nucleus, homotrimerization and DNA-binding activities. Part (via regulatory domain in the homotrimeric form) of a large heat shock-induced HSP90-dependent multichaperone complex at least composed of FKBP4, FKBP5, HSP90 proteins, PPID, PPP5C and PTGES3; this association maintains the HSF1 homotrimeric DNA-bound form in a transcriptionally inactive form. Interacts with BAG3 (via BAG domain); this interaction occurs in normal and heat-shocked cells promoting nuclear shuttling of HSF1 in a BAG3-dependent manner. Interacts (via homotrimeric and hyperphosphorylated form) with FKBP4; this interaction occurs upon heat shock in a HSP90-dependent multichaperone complex. Interacts (via homotrimeric form preferentially) with EEF1A proteins. In heat shocked cells, stress-denatured proteins compete with HSF1 homotrimeric DNA-bound form for association of the HSP90-dependent multichaperone complex, and hence alleviating repression of HSF1-mediated transcriptional activity. Interacts (via homotrimeric form preferentially) with DAXX; this interaction relieves homotrimeric HSF1 from repression of its transcriptional activity by HSP90-dependent multichaperone complex upon heat shock. Interacts (via D domain and preferentially with hyperphosphorylated form) with JNK1; this interaction occurs under both normal growth conditions and immediately upon heat shock. Interacts (via D domain and preferentially with hyperphosphorylated form) with MAPK3; this interaction occurs upon heat shock. Interacts with IER5 (via central region); this interaction promotes PPP2CA-induced dephosphorylation on Ser-121, Ser-307, Ser-314 and Thr-324 and HSF1 transactivation activity. Found in a ribonucleoprotein complex composed of the HSF1 homotrimeric form, translation elongation factor eEF1A proteins and non-coding RNA heat shock RNA-1 (HSR1); this complex occurs upon heat shock and stimulates HSF1 DNA-binding activity. Interacts (via transactivation domain) with HSPA1A/HSP70 and DNAJB1; these interactions result in the inhibition of heat shock- and HSF1-induced transcriptional activity during the attenuation and recovery phase from heat shock. Interacts (via Ser-303 and Ser-307 phosphorylated form) with YWHAE; this interaction promotes HSF1 sequestration in the cytoplasm in an ERK-dependent manner. Found in a complex with IER5 and PPP2CA. Interacts with TPR; this interaction increases upon heat shock and stimulates export of HSP70 mRNA. Interacts with SYMPK (via N-terminus) and CSTF2; these interactions occur upon heat shock. Interacts (via transactivation domain) with HSPA8. Interacts with EEF1D; this interaction occurs at heat shock promoter element (HSE) sequences. Interacts with MAPKAPK2. Interacts with PRKACA/PKA. Interacts (via transactivation domain) with GTF2A2. Interacts (via transactivation domain) with GTF2B. Interacts (via transactivation domain) with TBP. Interacts with CDK9, CCNT1 and EP300. Interacts (via N-terminus) with XRCC5 (via N-terminus) and XRCC6 (via N-terminus); these interactions are direct and prevent XRCC5/XRCC6 heterodimeric binding and non-homologous end joining (NHEJ) repair activities induced by ionizing radiation (IR). Interacts with PLK1; this interaction occurs during the early mitotic period, increases upon heat shock but does not modulate neither HSF1 homotrimerization and DNA-binding activities. Interacts with CDC20; this interaction occurs in mitosis in a MAD2L1-dependent manner and prevents PLK1-stimulated degradation of HSF1 by blocking the recruitment of the SCF(BTRC) ubiquitin ligase complex. Interacts with MAD2L1; this interaction occurs in mitosis. Interacts with BTRC; this interaction occurs during mitosis, induces its ubiquitin-dependent degradation following stimulus-dependent phosphorylation, a process inhibited by CDC20. Interacts with HSP90AA1 and HSP90AB1. Forms a complex with TTC5/STRAP and p300/EP300; these interactions augment chromatin-bound HSF1 and p300/EP300 histone acetyltransferase activity. Post-translationally, phosphorylated. Phosphorylated in unstressed cells; this phosphorylation is constitutive and implicated in the repression of HSF1 transcriptional activity. Phosphorylated on Ser-121 by MAPKAPK2; this phosphorylation promotes interaction with HSP90 proteins and inhibits HSF1 homotrimerization, DNA-binding and transactivation activities. Phosphorylation on Ser-303 by GSK3B/GSK3-beta and on Ser-307 by MAPK3 within the regulatory domain is involved in the repression of HSF1 transcriptional activity and occurs in a RAF1-dependent manner. Phosphorylation on Ser-303 and Ser-307 increases HSF1 nuclear export in a YWHAE- and XPO1/CRM1-dependent manner. Phosphorylation on Ser-307 is a prerequisite for phosphorylation on Ser-303. According to, Ser-303 is not phosphorylated in unstressed cells. Phosphorylated on Ser-415 by PLK1; phosphorylation promotes nuclear translocation upon heat shock. Hyperphosphorylated upon heat shock and during the attenuation and recovery phase period of the heat shock response. Phosphorylated on Thr-142; this phosphorylation increases HSF1 transactivation activity upon heat shock. Phosphorylation on Ser-230 by CAMK2A; this phosphorylation enhances HSF1 transactivation activity upon heat shock. Phosphorylation on Ser-327 by MAPK12; this phosphorylation enhances HSF1 nuclear translocation, homotrimerization and transactivation activities upon heat shock. Phosphorylated on Ser-320 by PRKACA/PKA; this phosphorylation promotes nuclear localization and transcriptional activity upon heat shock. Phosphorylated on Ser-359 by MAPK8; this phosphorylation occurs upon heat shock, induces HSF1 translocation into nuclear stress bodies and negatively regulates transactivation activity. Neither basal nor stress-inducible phosphorylation on Ser-230, Ser-292, Ser-303, Ser-307, Ser-314, Ser-319, Ser-320, Thr-324, Ser-327, Ser-339, Ser-346, Ser-359 and Ser-364 within the regulatory domain is involved in the regulation of HSF1 subcellular localization or DNA-binding activity; however, it negatively regulates HSF1 transactivation activity. Phosphorylated by PLK1 in the early mitotic period; this phosphorylation regulates HSF1 localization to the spindle pole, the recruitment of the SCF(BTRC) ubiquitin ligase complex inducing HSF1 degradation, and hence mitotic progression. Dephosphorylated on Ser-121, Ser-307, Ser-314, Thr-324 by phosphatase PPP2CA in an IER5-dependent manner, leading to HSF1-mediated transactivation activity. In terms of processing, sumoylated with SUMO1 and SUMO2 upon heat shock in a ERK2-dependent manner. Sumoylated by SUMO1 on Lys-298; sumoylation occurs upon heat shock and promotes its localization to nuclear stress bodies and DNA-binding activity. Phosphorylation on Ser-303 and Ser-307 is probably a prerequisite for sumoylation. Acetylated on Lys-118; this acetylation is decreased in a IER5-dependent manner. Acetylated on Lys-118, Lys-208 and Lys-298; these acetylations occur in a EP300-dependent manner. Acetylated on Lys-80; this acetylation inhibits DNA-binding activity upon heat shock. Deacetylated on Lys-80 by SIRT1; this deacetylation increases DNA-binding activity. Post-translationally, ubiquitinated by SCF(BTRC) and degraded following stimulus-dependent phosphorylation by PLK1 in mitosis. Polyubiquitinated. Undergoes proteasomal degradation upon heat shock and during the attenuation and recovery phase period of the heat shock response.

It is found in the nucleus. Its subcellular location is the cytoplasm. The protein resides in the nucleoplasm. The protein localises to the perinuclear region. It localises to the cytoskeleton. It is found in the spindle pole. Its subcellular location is the microtubule organizing center. The protein resides in the centrosome. The protein localises to the chromosome. It localises to the centromere. It is found in the kinetochore. In terms of biological role, functions as a stress-inducible and DNA-binding transcription factor that plays a central role in the transcriptional activation of the heat shock response (HSR), leading to the expression of a large class of molecular chaperones, heat shock proteins (HSPs), that protect cells from cellular insult damage. In unstressed cells, is present in a HSP90-containing multichaperone complex that maintains it in a non-DNA-binding inactivated monomeric form. Upon exposure to heat and other stress stimuli, undergoes homotrimerization and activates HSP gene transcription through binding to site-specific heat shock elements (HSEs) present in the promoter regions of HSP genes. Upon heat shock stress, forms a chromatin-associated complex with TTC5/STRAP and p300/EP300 to stimulate HSR transcription, therefore increasing cell survival. Activation is reversible, and during the attenuation and recovery phase period of the HSR, returns to its unactivated form. Binds to inverted 5'-NGAAN-3' pentamer DNA sequences. Binds to chromatin at heat shock gene promoters. Activates transcription of transcription factor FOXR1 which in turn activates transcription of the heat shock chaperones HSPA1A and HSPA6 and the antioxidant NADPH-dependent reductase DHRS2. Also serves several other functions independently of its transcriptional activity. Involved in the repression of Ras-induced transcriptional activation of the c-fos gene in heat-stressed cells. Positively regulates pre-mRNA 3'-end processing and polyadenylation of HSP70 mRNA upon heat-stressed cells in a symplekin (SYMPK)-dependent manner. Plays a role in nuclear export of stress-induced HSP70 mRNA. Plays a role in the regulation of mitotic progression. Also plays a role as a negative regulator of non-homologous end joining (NHEJ) repair activity in a DNA damage-dependent manner. Involved in stress-induced cancer cell proliferation in a IER5-dependent manner. The chain is Heat shock factor protein 1 from Bos taurus (Bovine).